The sequence spans 199 residues: MSTHILLASGSEIRAKLLRQAGVDFRVEVARVDEDAIKTALEADGASPRDIADTLAEAKARKVSGKFPEEMVLGCDQVLDFEGTLLSKPKDKNQALQQLKAMRGKRHMLLSAAVIYCDAKPLWRHVGQVRLVMRMASDAYLESYVERNWESIRHAVGAYKLEEEGVRLFTTIDGSYFNVLGLPMLELMNYLGLQGIIEQ.

The active-site Proton acceptor is Asp-76.

This sequence belongs to the Maf family. Requires a divalent metal cation as cofactor.

It localises to the cytoplasm. The enzyme catalyses a ribonucleoside 5'-triphosphate + H2O = a ribonucleoside 5'-phosphate + diphosphate + H(+). The catalysed reaction is a 2'-deoxyribonucleoside 5'-triphosphate + H2O = a 2'-deoxyribonucleoside 5'-phosphate + diphosphate + H(+). Nucleoside triphosphate pyrophosphatase. May have a dual role in cell division arrest and in preventing the incorporation of modified nucleotides into cellular nucleic acids. The sequence is that of Nucleoside triphosphate pyrophosphatase from Ruegeria sp. (strain TM1040) (Silicibacter sp.).